A 92-amino-acid chain; its full sequence is DNA-directed RNA polymerase subunit Rpo11 (92 aa).

The protein belongs to the archaeal Rpo11/eukaryotic RPB11/RPC19 RNA polymerase subunit family. Part of the 13-subunit RNA polymerase complex.

It is found in the cytoplasm. It carries out the reaction RNA(n) + a ribonucleoside 5'-triphosphate = RNA(n+1) + diphosphate. Its function is as follows. DNA-dependent RNA polymerase (RNAP) catalyzes the transcription of DNA into RNA using the four ribonucleoside triphosphates as substrates. This chain is DNA-directed RNA polymerase subunit Rpo11, found in Saccharolobus shibatae (strain ATCC 51178 / DSM 5389 / JCM 8931 / NBRC 15437 / B12) (Sulfolobus shibatae).